The following is a 226-amino-acid chain: Ribonuclease 3 (226 aa).

The 123-residue stretch at 7-129 (LPRLCRTLGY…IIGAVYLDSD (123 aa)) folds into the RNase III domain. Residue E42 participates in Mg(2+) binding. Residue D46 is part of the active site. Positions 115 and 118 each coordinate Mg(2+). E118 is a catalytic residue. Residues 156 to 226 (DAKTLLQEHL…AAQVLELLKK (71 aa)) enclose the DRBM domain.

It belongs to the ribonuclease III family. As to quaternary structure, homodimer. Mg(2+) serves as cofactor.

The protein resides in the cytoplasm. The catalysed reaction is Endonucleolytic cleavage to 5'-phosphomonoester.. Functionally, digests double-stranded RNA. Involved in the processing of primary rRNA transcript to yield the immediate precursors to the large and small rRNAs (23S and 16S). Processes some mRNAs, and tRNAs when they are encoded in the rRNA operon. Processes pre-crRNA and tracrRNA of type II CRISPR loci if present in the organism. The polypeptide is Ribonuclease 3 (Shewanella baltica (strain OS185)).